A 932-amino-acid polypeptide reads, in one-letter code: RNA-binding protein 12 (932 aa).

Positions 96-116 (DIPPANASRSGPPPSSGMSSR) are disordered. The segment covering 98 to 116 (PPANASRSGPPPSSGMSSR) has biased composition (low complexity). Residues 304-379 (LYVSVHGMPF…RYVEVSPATE (76 aa)) form the RRM 1 domain. Phosphoserine is present on residues serine 352 and serine 375. 2 stretches are compositionally biased toward polar residues: residues 392–401 (KQNMGPSGQT) and 408–417 (LPRSKSPSGQ). The segment at 392–424 (KQNMGPSGQTHPPPQTLPRSKSPSGQKRSRSRS) is disordered. Phosphoserine is present on residues serine 420, serine 422, and serine 424. The 78-residue stretch at 430 to 507 (FCVYLKGLPF…RFIQVHPITK (78 aa)) folds into the RRM 2 domain. Residue serine 525 is modified to Phosphoserine. Positions 717–734 (NGPPFNFPGNFGGSNAFG) are enriched in low complexity. Residues 717–853 (NGPPFNFPGN…PGFASSSGKP (137 aa)) form a disordered region. The span at 783–811 (SGFGGGPQNFGNGPGSLGGPPGFGSGPPG) shows a compositional bias: gly residues. The segment covering 824-836 (AFGPGPGPGPGPG) has biased composition (pro residues). The RRM 3 domain occupies 856–932 (TVIKVQNMPF…GSRKVKLVLG (77 aa)).

The protein resides in the nucleus. The sequence is that of RNA-binding protein 12 (RBM12) from Homo sapiens (Human).